The sequence spans 310 residues: Upstream stimulatory factor 1 (310 aa).

A compositionally biased stretch (polar residues) spans 1-17 (MKGQQKTAETEEGTVQI). 2 disordered regions span residues 1–26 (MKGQ…ATGE) and 171–209 (QGGS…EVER). Residues 190–209 (EAPRTTRDEKRRAQHNEVER) are compositionally biased toward basic and acidic residues. The bHLH domain occupies 199–254 (KRRAQHNEVERRRRDKINNWIVQLSKIIPDCSMESTKSGQSKGGILSKACDYIQEL). The leucine-zipper stretch occupies residues 271 to 292 (LQLDNDVLRQQVEDLKNKNLLL). K306 is covalently cross-linked (Glycyl lysine isopeptide (Lys-Gly) (interchain with G-Cter in SUMO2)).

In terms of assembly, efficient DNA binding requires dimerization with another bHLH protein. Binds DNA as a homodimer or a heterodimer (USF1/USF2).

It is found in the nucleus. Functionally, transcription factor that binds to a symmetrical DNA sequence (E-boxes) (5'-CACGTG-3') that is found in a variety of viral and cellular promoters. This is Upstream stimulatory factor 1 (Usf1) from Mus musculus (Mouse).